We begin with the raw amino-acid sequence, 143 residues long: Transcriptional regulator MraZ (143 aa).

2 SpoVT-AbrB domains span residues 6–49 and 78–121; these read TYNH…NEAE and SDET…DLKV.

It belongs to the MraZ family. Forms oligomers.

Its subcellular location is the cytoplasm. The protein resides in the nucleoid. This Spiroplasma kunkelii protein is Transcriptional regulator MraZ.